The chain runs to 345 residues: uncharacterized protein (345 aa).

Disordered regions lie at residues 1–24 and 296–345; these read MGLE…ENRK and MTAH…LNES. A compositionally biased stretch (acidic residues) spans 304–323; sequence SDYDNDDDTDGIINETDYEL. Residues 324 to 345 are compositionally biased toward polar residues; the sequence is DTSQSEFATLTTSSNKSILNES.

This is an uncharacterized protein from Schizosaccharomyces pombe (strain 972 / ATCC 24843) (Fission yeast).